The sequence spans 1147 residues: ATP-dependent helicase/deoxyribonuclease subunit B (1147 aa).

8–15 is a binding site for ATP; the sequence is GRAGSGKS. Residues Cys-786, Cys-1106, Cys-1109, and Cys-1115 each coordinate [4Fe-4S] cluster.

The protein belongs to the helicase family. AddB/RexB type 1 subfamily. Heterodimer of AddA and AddB. The cofactor is Mg(2+). [4Fe-4S] cluster serves as cofactor.

In terms of biological role, the heterodimer acts as both an ATP-dependent DNA helicase and an ATP-dependent, dual-direction single-stranded exonuclease. Recognizes the chi site generating a DNA molecule suitable for the initiation of homologous recombination. The AddB subunit has 5' -&gt; 3' nuclease activity but not helicase activity. This chain is ATP-dependent helicase/deoxyribonuclease subunit B, found in Clostridium botulinum (strain Loch Maree / Type A3).